A 255-amino-acid chain; its full sequence is uncharacterized protein (255 aa).

The N-terminal stretch at M1 to G23 is a signal peptide. C24 carries the N-palmitoyl cysteine lipid modification. The S-diacylglycerol cysteine moiety is linked to residue C24.

It belongs to the staphylococcal tandem lipoprotein family.

The protein localises to the cell membrane. This is an uncharacterized protein from Staphylococcus aureus (strain N315).